A 125-amino-acid polypeptide reads, in one-letter code: Aspartate 1-decarboxylase 2 (125 aa).

The Schiff-base intermediate with substrate; via pyruvic acid role is filled by S25. S25 bears the Pyruvic acid (Ser) mark. T57 is a substrate binding site. Y58 serves as the catalytic Proton donor. 73–75 (GAA) serves as a coordination point for substrate.

This sequence belongs to the PanD family. In terms of assembly, heterooctamer of four alpha and four beta subunits. It depends on pyruvate as a cofactor. Post-translationally, is synthesized initially as an inactive proenzyme, which is activated by self-cleavage at a specific serine bond to produce a beta-subunit with a hydroxyl group at its C-terminus and an alpha-subunit with a pyruvoyl group at its N-terminus.

The protein resides in the cytoplasm. The enzyme catalyses L-aspartate + H(+) = beta-alanine + CO2. It participates in cofactor biosynthesis; (R)-pantothenate biosynthesis; beta-alanine from L-aspartate: step 1/1. Functionally, catalyzes the pyruvoyl-dependent decarboxylation of aspartate to produce beta-alanine. This is Aspartate 1-decarboxylase 2 from Gloeobacter violaceus (strain ATCC 29082 / PCC 7421).